An 87-amino-acid polypeptide reads, in one-letter code: RNA-binding protein Hfq (87 aa).

One can recognise a Sm domain in the interval 9–68; the sequence is DPFLNALRRERIPVSIYLVNGIKLQGQIESFDQFVILLKNTVSQMVYKHAISTVVPARAV.

It belongs to the Hfq family. In terms of assembly, homohexamer.

Its function is as follows. RNA chaperone that binds small regulatory RNA (sRNAs) and mRNAs to facilitate mRNA translational regulation in response to envelope stress, environmental stress and changes in metabolite concentrations. Also binds with high specificity to tRNAs. The protein is RNA-binding protein Hfq of Aeromonas salmonicida (strain A449).